The primary structure comprises 333 residues: Electron transfer flavoprotein subunit alpha, mitochondrial (333 aa).

A mitochondrion-targeting transit peptide spans 1-19 (MFRAAAPGQLRRAASLLRF). The domain I stretch occupies residues 20 to 204 (QSTLVIAEHA…EISEWLDQKL (185 aa)). N6-acetyllysine; alternate is present on Lys59. Lys59 is modified (N6-succinyllysine; alternate). Lys62 is subject to N6-acetyllysine. Lys69 is modified (N6-acetyllysine; alternate). N6-succinyllysine; alternate is present on Lys69. The residue at position 75 (Lys75) is an N6-acetyllysine. Lys85 is modified (N6-acetyllysine; alternate). Lys85 carries the post-translational modification N6-succinyllysine; alternate. Phosphothreonine is present on Thr93. An N6-acetyllysine mark is found at Lys101 and Lys139. Ser140 bears the Phosphoserine mark. N6-acetyllysine; alternate is present on Lys158. Lys158 bears the N6-succinyllysine; alternate mark. At Lys164 the chain carries N6-acetyllysine. Lys187 carries the N6-succinyllysine modification. Residue Lys203 is modified to N6-acetyllysine; alternate. Lys203 is subject to N6-succinyllysine; alternate. Positions 205–333 (TKSDRPELTG…PEMTEILKKK (129 aa)) are domain II. N6-succinyllysine is present on Lys216. Arg223 lines the FAD pocket. Residues Lys226 and Lys232 each carry the N6-acetyllysine; alternate modification. N6-succinyllysine; alternate occurs at positions 226 and 232. Residues Ser248, 263–266 (VGQT), 281–286 (SGAIQH), and Asn300 each bind FAD. Lys301 bears the N6-succinyllysine mark. Position 318-319 (318-319 (DL)) interacts with FAD.

The protein belongs to the ETF alpha-subunit/FixB family. Heterodimer composed of ETFA and ETFB. Identified in a complex that contains ETFA, ETFB and ETFRF1. Interaction with ETFRF1 promotes dissociation of the bound FAD and loss of electron transfer activity. Interacts with TASOR. The cofactor is FAD. In terms of processing, the N-terminus is blocked.

Its subcellular location is the mitochondrion matrix. Functionally, heterodimeric electron transfer flavoprotein that accepts electrons from several mitochondrial dehydrogenases, including acyl-CoA dehydrogenases, glutaryl-CoA and sarcosine dehydrogenase. It transfers the electrons to the main mitochondrial respiratory chain via ETF-ubiquinone oxidoreductase (ETF dehydrogenase). Required for normal mitochondrial fatty acid oxidation and normal amino acid metabolism. The sequence is that of Electron transfer flavoprotein subunit alpha, mitochondrial (ETFA) from Homo sapiens (Human).